A 642-amino-acid polypeptide reads, in one-letter code: 1-deoxy-D-xylulose-5-phosphate synthase (642 aa).

Thiamine diphosphate is bound by residues histidine 79 and 120-122 (GHS). Aspartate 151 provides a ligand contact to Mg(2+). Residues 152–153 (GS), asparagine 180, tyrosine 290, and glutamate 372 each bind thiamine diphosphate. Asparagine 180 contacts Mg(2+).

This sequence belongs to the transketolase family. DXPS subfamily. Homodimer. Requires Mg(2+) as cofactor. Thiamine diphosphate is required as a cofactor.

It carries out the reaction D-glyceraldehyde 3-phosphate + pyruvate + H(+) = 1-deoxy-D-xylulose 5-phosphate + CO2. It participates in metabolic intermediate biosynthesis; 1-deoxy-D-xylulose 5-phosphate biosynthesis; 1-deoxy-D-xylulose 5-phosphate from D-glyceraldehyde 3-phosphate and pyruvate: step 1/1. Its function is as follows. Catalyzes the acyloin condensation reaction between C atoms 2 and 3 of pyruvate and glyceraldehyde 3-phosphate to yield 1-deoxy-D-xylulose-5-phosphate (DXP). The polypeptide is 1-deoxy-D-xylulose-5-phosphate synthase (Rhodospirillum centenum (strain ATCC 51521 / SW)).